A 739-amino-acid polypeptide reads, in one-letter code: Poly(A) polymerase alpha (739 aa).

The segment covering 1–17 has biased composition (low complexity); sequence MPFPVTTQGSQQTQPPQ. Residues 1-22 form a disordered region; sequence MPFPVTTQGSQQTQPPQRHYGI. 2 positions are modified to phosphoserine: serine 10 and serine 24. ATP-binding positions include 100–102, threonine 109, 113–115, aspartate 167, lysine 228, tyrosine 237, and 246–247; these read FGS, DID, and GV. Mg(2+)-binding residues include aspartate 113, aspartate 115, and aspartate 167. Glycyl lysine isopeptide (Lys-Gly) (interchain with G-Cter in SUMO) cross-links involve residues lysine 444, lysine 445, lysine 506, and lysine 507. The Nuclear localization signal 1 signature appears at 490-507; that stretch reads RKQLHQLLPSHVLQKRKK. The tract at residues 508 to 643 is ser/Thr-rich; the sequence is HSTEGVKLTA…TKVPNPIVGV (136 aa). A compositionally biased stretch (low complexity) spans 523–534; that stretch reads LDLSMDSDNSMS. The disordered stretch occupies residues 523-725; sequence LDLSMDSDNS…SDIPALPANP (203 aa). The segment covering 535–557 has biased composition (polar residues); that stretch reads VPSPTSAMKTSPLNSSGSSQGRN. At serine 537 the chain carries Phosphoserine; by MAPK. Serine 558 carries the post-translational modification Phosphoserine. Over residues 566–582 the composition is skewed to polar residues; the sequence is ASVTSIQASEVSVPQAN. Low complexity-rich tracts occupy residues 583-594 and 611-622; these read SSESPGGPSSES and TVSRVVSSTRLV. An N6-acetyllysine mark is found at lysine 635 and lysine 644. The short motif at 644–659 is the Nuclear localization signal 2 element; that stretch reads KRTSSPNKEESPKKTK. Basic and acidic residues-rich tracts occupy residues 650–660 and 676–686; these read NKEESPKKTKT and GHDKTETKEQV. The tract at residues 671–739 is required for interaction with NUDT21; sequence CLALSGHDKT…KNSIKLRLNR (69 aa). Polar residues predominate over residues 691 to 715; sequence SAVQSETVPASASLLASQKTSSTDL. Lysine 730 carries the N6-acetyllysine; alternate modification. Residue lysine 730 forms a Glycyl lysine isopeptide (Lys-Gly) (interchain with G-Cter in SUMO); alternate linkage. Serine 732 carries the post-translational modification Phosphoserine. Lysine 734 bears the N6-acetyllysine; alternate mark. Lysine 734 is covalently cross-linked (Glycyl lysine isopeptide (Lys-Gly) (interchain with G-Cter in SUMO); alternate).

It belongs to the poly(A) polymerase family. As to quaternary structure, monomer. Found in a complex with CPSF1, FIP1L1 and PAPOLA. Interacts with AHCYL1 and FIP1L1; the interaction with AHCYL1 seems to increase interaction with FIP1L1. Interacts with NUDT21; the interaction is diminished by acetylation. Interacts with KPNB1; the interaction promotes PAP nuclear import and is inhibited by acetylation of PAP. Mg(2+) serves as cofactor. It depends on Mn(2+) as a cofactor. In terms of processing, polysumoylated. Varying sumoylation depending on tissue- and cell-type. Highly sumoylated in bladder and NIH 3T3 cells. Sumoylation is required for nuclear localization and enhances PAP stability. Desumoylated by SENP1. Inhibits polymerase activity. Hyperphosphorylation on multiple CDK2 consensus and non-consensus sites in the C-terminal Ser/Thr-rich region represses PAP activity in late M-phase. Phosphorylation/dephosphorylation may regulate the interaction between PAP and CPSF. Post-translationally, acetylated in the C-terminus. Acetylation decreases interaction with NUDT21 and KPNB1, and inhibits nuclear localization through inhibiting binding to the importin alpha/beta complex. In terms of tissue distribution, expressed in brain, thymus, lung, kidney, bladder, testis and spleen.

It is found in the nucleus. The catalysed reaction is RNA(n) + ATP = RNA(n)-3'-adenine ribonucleotide + diphosphate. Functionally, polymerase that creates the 3'-poly(A) tail of mRNA's. Also required for the endoribonucleolytic cleavage reaction at some polyadenylation sites. May acquire specificity through interaction with a cleavage and polyadenylation specificity factor (CPSF) at its C-terminus. The sequence is that of Poly(A) polymerase alpha (Papola) from Mus musculus (Mouse).